The chain runs to 304 residues: MILGRTISLFLGCSALVSGALIEHHAASSTDQPVDVPYNLDMFSQAAVLAQETYCGEQAHDYGLKLGDATLLWTAGDGNVRQRVNLYQSDSLGIAVAIQGTNTSSLRSDLHDAQLRPVDPDSRYRRFLPQGTKVMNGFQKGYTDLVDDIFDHVKKFKQEKNESRVTVIGHSLGAAIGLLASLDINLRLEDGLFKSYLFGLPRVGNPIFANFVDRKIGDKLHWVVNGRDWVPTVPPRALGYQHPSNYVWIYPANSTNWKLYPGQENVHGMLTVAREFNFDDHEGIYFHTQIGASLGKCPAVLGGY.

Positions 1 to 19 are cleaved as a signal peptide; the sequence is MILGRTISLFLGCSALVSG. Residues cysteine 55 and cysteine 297 are joined by a disulfide bond. 2 N-linked (GlcNAc...) asparagine glycosylation sites follow: asparagine 102 and asparagine 161. The Nucleophile role is filled by serine 171. The active site involves aspartate 228. Asparagine 253 is a glycosylation site (N-linked (GlcNAc...) asparagine). Residue histidine 281 is part of the active site.

The protein belongs to the AB hydrolase superfamily. Lipase family. Class 3 subfamily.

It localises to the secreted. It is found in the cell wall. The catalysed reaction is a monoacylglycerol + H2O = glycerol + a fatty acid + H(+). The enzyme catalyses a diacylglycerol + H2O = a monoacylglycerol + a fatty acid + H(+). Secreted lipase involved in Dandruff and seborrheic dermatitis (D/SD) probably via lipase-mediated breakdown of sebaceous lipids and release of irritating free fatty acids. Shows activity against monoglyceride and diglyceride substrates, but not triglyceride substrates and does not exhibit regio-selective production of diacylglycerols. Hydrolyzes both 1,2- and 1,3-diacylglycerols. Also hydrolyzes distearin, dilinolein and dipalmitolein. Cleaves oleic acid from 1,2 isomers of diolein on both the 1 and the 2 position of the glycerol backbone, resulting mainly in free fatty acids but no monoolein is detected. Shows activity on monoolein and liberates mostly free fatty acids, but can also perform the reverse reaction and produce diolein. This is Secreted mono- and diacylglycerol lipase MDL2 from Malassezia globosa (strain ATCC MYA-4612 / CBS 7966) (Dandruff-associated fungus).